Reading from the N-terminus, the 249-residue chain is Cysteine-rich secretory protein 1 (249 aa).

The first 20 residues, 1–20, serve as a signal peptide directing secretion; that stretch reads MEIKHLLFLVAAACLLPVLS. Residues 45 to 175 enclose the SCP domain; that stretch reads VNIHNTLRRG…SPRYFYVCHY (131 aa). Asn104 carries N-linked (GlcNAc...) asparagine glycosylation. 5 disulfide bridges follow: Cys195-Cys202, Cys198-Cys207, Cys211-Cys244, Cys220-Cys238, and Cys229-Cys242. Residues 211–244 form the ShKT domain; it reads CIYYDEYTDCSLEVRFLGCNHSTPRMFCKATCLC. N-linked (GlcNAc...) asparagine glycosylation occurs at Asn230.

The protein belongs to the CRISP family. As to expression, expressed in all the regions of the epididymis except the caput and is not detected in the testis, prostate, seminal vesicle, and brain.

Its function is as follows. May have a role in sperm-egg fusion and maturation. The chain is Cysteine-rich secretory protein 1 (CRISP1) from Macaca mulatta (Rhesus macaque).